We begin with the raw amino-acid sequence, 318 residues long: Ribose-phosphate pyrophosphokinase 1 (318 aa).

Residues 43 to 45 and 102 to 103 contribute to the ATP site; these read DGE and RQ. 2 residues coordinate Mg(2+): H136 and D176. The active site involves K199. D-ribose 5-phosphate is bound by residues R201, D225, and 229–233; that span reads DTAGT.

It belongs to the ribose-phosphate pyrophosphokinase family. Class I subfamily. As to quaternary structure, homohexamer. The cofactor is Mg(2+).

The protein localises to the cytoplasm. The enzyme catalyses D-ribose 5-phosphate + ATP = 5-phospho-alpha-D-ribose 1-diphosphate + AMP + H(+). Its pathway is metabolic intermediate biosynthesis; 5-phospho-alpha-D-ribose 1-diphosphate biosynthesis; 5-phospho-alpha-D-ribose 1-diphosphate from D-ribose 5-phosphate (route I): step 1/1. In terms of biological role, involved in the biosynthesis of the central metabolite phospho-alpha-D-ribosyl-1-pyrophosphate (PRPP) via the transfer of pyrophosphoryl group from ATP to 1-hydroxyl of ribose-5-phosphate (Rib-5-P). The polypeptide is Ribose-phosphate pyrophosphokinase 1 (Listeria innocua serovar 6a (strain ATCC BAA-680 / CLIP 11262)).